A 318-amino-acid chain; its full sequence is Non-homologous end joining protein Ku (318 aa).

A Ku domain is found at Ala10 to Lys193. Positions Ser259 to Ser318 are disordered. Positions Gly266 to Pro289 are enriched in basic and acidic residues. The span at Ala290–Ser318 shows a compositional bias: basic residues.

Belongs to the prokaryotic Ku family. As to quaternary structure, homodimer. Interacts with Sir2 and probably also with LigD; may form a trimeric complex during NHEJ.

With LigD forms a non-homologous end joining (NHEJ) repair enzyme which repairs blunt-end and 5'-overhang double strand breaks (DSB) with about 50% fidelity, and DSB with non-complementary 3' ends. Plays a partial role in NHEJ on 3'-overhang repair of complementary ends. NHEJ repairs DSB with blunt ends and 5' overhangs with a high level of nucleotide insertion/deletion, without a need for microhomology. This protein but not LigD also suppresses homologous recombination. Overexpression dramatically increases the efficiency of NHEJ with no effect on repair fidelity. The sequence is that of Non-homologous end joining protein Ku from Mycolicibacterium smegmatis (strain ATCC 700084 / mc(2)155) (Mycobacterium smegmatis).